The primary structure comprises 186 residues: Ribosome maturation factor RimP (186 aa).

The protein belongs to the RimP family.

It is found in the cytoplasm. In terms of biological role, required for maturation of 30S ribosomal subunits. This chain is Ribosome maturation factor RimP, found in Novosphingobium aromaticivorans (strain ATCC 700278 / DSM 12444 / CCUG 56034 / CIP 105152 / NBRC 16084 / F199).